A 366-amino-acid polypeptide reads, in one-letter code: Quinolinate synthase (366 aa).

The iminosuccinate site is built by histidine 44 and serine 61. Residue cysteine 108 participates in [4Fe-4S] cluster binding. Iminosuccinate-binding positions include 139-141 (YIN) and serine 160. Cysteine 228 provides a ligand contact to [4Fe-4S] cluster. Residues 254-256 (HPE) and threonine 271 contribute to the iminosuccinate site. [4Fe-4S] cluster is bound at residue cysteine 318.

It belongs to the quinolinate synthase family. Type 3 subfamily. It depends on [4Fe-4S] cluster as a cofactor.

Its subcellular location is the cytoplasm. The catalysed reaction is iminosuccinate + dihydroxyacetone phosphate = quinolinate + phosphate + 2 H2O + H(+). The protein operates within cofactor biosynthesis; NAD(+) biosynthesis; quinolinate from iminoaspartate: step 1/1. In terms of biological role, catalyzes the condensation of iminoaspartate with dihydroxyacetone phosphate to form quinolinate. In Listeria monocytogenes serotype 4b (strain F2365), this protein is Quinolinate synthase.